Reading from the N-terminus, the 132-residue chain is Small ribosomal subunit protein uS11 (132 aa).

Basic residues predominate over residues 1–16; the sequence is MAAGMKGKRSRRRKER. Residues 1-20 form a disordered region; that stretch reads MAAGMKGKRSRRRKERKNVE.

It belongs to the universal ribosomal protein uS11 family. In terms of assembly, part of the 30S ribosomal subunit. Interacts with proteins S7 and S18. Binds to IF-3.

Its function is as follows. Located on the platform of the 30S subunit, it bridges several disparate RNA helices of the 16S rRNA. Forms part of the Shine-Dalgarno cleft in the 70S ribosome. This chain is Small ribosomal subunit protein uS11, found in Clostridium botulinum (strain Hall / ATCC 3502 / NCTC 13319 / Type A).